The primary structure comprises 166 residues: DNA polymerase epsilon subunit C (166 aa).

Residues serine 112–serine 166 are disordered. A compositionally biased stretch (acidic residues) spans isoleucine 115–glutamate 151. Residues proline 152–serine 166 are compositionally biased toward basic and acidic residues.

Heterotetramer. Consists of four subunits: POL2, DPB2, DPB3 and DPB4.

Its subcellular location is the nucleus. In terms of biological role, as accessory component of the DNA polymerase epsilon (DNA polymerase II) participates in chromosomal DNA replication. This Kluyveromyces lactis (strain ATCC 8585 / CBS 2359 / DSM 70799 / NBRC 1267 / NRRL Y-1140 / WM37) (Yeast) protein is DNA polymerase epsilon subunit C (DPB3).